Reading from the N-terminus, the 214-residue chain is Ribosomal RNA small subunit methyltransferase G (214 aa).

S-adenosyl-L-methionine is bound by residues Gly56, Phe61, 107-108 (IE), and Arg125.

This sequence belongs to the methyltransferase superfamily. RNA methyltransferase RsmG family.

It is found in the cytoplasm. Specifically methylates the N7 position of a guanine in 16S rRNA. This chain is Ribosomal RNA small subunit methyltransferase G, found in Syntrophomonas wolfei subsp. wolfei (strain DSM 2245B / Goettingen).